A 1645-amino-acid chain; its full sequence is MSINAVDSKKLVEALLGDLRLLSQEAKKKQNHVKESAETGVVRIRNISTASVGDTVLITNLRAACTELLHPLVLACETRHTRLVQIALQGIQRLVQHRILSGNGATIVTNELWALVEAECEELRVLQTVPPLVSSELIVTGNTLAKCVVMCFRLHFAKDPIVINAASAAVRQLVSTVFERVIQEDGIFSSELTVVNPSGGRPSPRAAPPTLRPCAADAYMLFKDLCLLINGEAPTWLVGIQEMTRTLGLELLESLLKGYPSVFIRHTEFGDLLKDDVCPLIIRLFSPNVKAMHINSQHPSSRISNASMSNYPPTVSHDRQSFPISMRLVRIVTLLVQFYQNILHTECEIFISTLLKFVDGDRKGWQRPLALESLHRIISSTDLVKWMTESFDCRPNSTHVLEQVAVELSVVVQQCLVCTTFSSDQDNELDRSQEDGGPGFLVKGLWVPYVEHLTSKKTILLDSLDRMDAVAISEGYVLSRCCVALCDLTQAVYAVIDRLCVLDENCEAGSSEENLRIAKVAYANTQPSILAAIGSLLAASTDEIVSDQLLCCLSTLISAGCRVGADQDLHRSVYVLAIMSLPSPSYLNQFAGIPPPSPVSKREVSISEQVFDLESWPSTAQVTATGPPCPCPVVSTDLWNKQVLLTSKNLQAARTFIASITTHIKELNGLWYLCMATCEHLSWLLAMRPTQIGQFERETRDDHSNGPTVVTNAALGDIGMLSSLMDKVAPAIAALPNEEFLLVVDALIRLSDESLAVAATGRDSSLFPLAVLYRVCSLSLSGINVFWAKVANHFIKVCNHTSVSMRDWAAVALTSLAKHAIKSKTSMDPKSQQEMVIASLLALCSIPHIQVRRRQLDCVMSLMQTDGSSLLSTSWPNVIQIISSIIDNDTGCELSLVRQGYLGLRLVSSDFLQSIPFDCISGLVEAISRYSKQNTDQNISLSALTLLWTISDFIYRKMESVGNDASEAVWMVLYTCLSESCVDTRFAVRKSACQTLLQTVTAHGHALRAPAWHHVIWQIIIPLLDKVRSQTRCASTEKSNGELIMHHSRDTEQKQWTETCIHTLSAISKIFNSQRKSLLALNDFGAVWEAFLGYLDWAACYENAELSLSAIRSYQEVLLGKISSQTLNVNSHEKSNGSESTLDTVAPELPQAQWVESWKVWLRISRGLARQGCAAVANSVNADTKSTSSTPRMNSSTSSLTSLAPGVYVPGPSHLTAILHIFPPLFDKVAKCITVDDLKYESLPAVLESMMNVPIPSEQAPFVLPSSTTHLTPTQEALLEAVKIVYVECTISGTTLRTAIPDQIRLLLKFASMATQRISPNKVAPGGQKSYRDYALTAIVPFSEYSLRIAIEFFTSTSQYPDVSNSLIAINIIKFLGEPLYMKYTCISASTWKLAASSLMSVLRTSIPYARQNPEVFRSLWSTICDTMERWLFTPNKSSRLAADERKRDELMECQAIEIIRNEMLAYASRLPQEDVQRLISLLHRGSISQIDSTDVLDSHTQRNELAKACFDALLMSTDGAQAGAEEDDHRGILGNVAVTSLLQRCTQVMADFCKDWSAAGDLRLPRSRILEIISALQAIDSLIARLARDPRMTELYSQLVSLFPSVVDVMPCCHADGQLEQQLIKTIKSYQTLFLLQNIPQSTV.

This sequence belongs to the MON2 family.

In terms of biological role, may be required for traffic between late Golgi and early endosomes. The chain is Protein MON2 homolog from Caenorhabditis briggsae.